Consider the following 381-residue polypeptide: 4-hydroxy-3-methylbut-2-en-1-yl diphosphate synthase (flavodoxin) (381 aa).

[4Fe-4S] cluster contacts are provided by cysteine 273, cysteine 276, cysteine 308, and glutamate 315.

This sequence belongs to the IspG family. [4Fe-4S] cluster serves as cofactor.

It catalyses the reaction (2E)-4-hydroxy-3-methylbut-2-enyl diphosphate + oxidized [flavodoxin] + H2O + 2 H(+) = 2-C-methyl-D-erythritol 2,4-cyclic diphosphate + reduced [flavodoxin]. It functions in the pathway isoprenoid biosynthesis; isopentenyl diphosphate biosynthesis via DXP pathway; isopentenyl diphosphate from 1-deoxy-D-xylulose 5-phosphate: step 5/6. Converts 2C-methyl-D-erythritol 2,4-cyclodiphosphate (ME-2,4cPP) into 1-hydroxy-2-methyl-2-(E)-butenyl 4-diphosphate. The sequence is that of 4-hydroxy-3-methylbut-2-en-1-yl diphosphate synthase (flavodoxin) from Gluconobacter oxydans (strain 621H) (Gluconobacter suboxydans).